A 339-amino-acid chain; its full sequence is Ferrochelatase (339 aa).

Residues H202 and E283 each contribute to the Fe cation site.

This sequence belongs to the ferrochelatase family.

It localises to the cytoplasm. The catalysed reaction is heme b + 2 H(+) = protoporphyrin IX + Fe(2+). It functions in the pathway porphyrin-containing compound metabolism; protoheme biosynthesis; protoheme from protoporphyrin-IX: step 1/1. Its function is as follows. Catalyzes the ferrous insertion into protoporphyrin IX. In Psychrobacter sp. (strain PRwf-1), this protein is Ferrochelatase.